Reading from the N-terminus, the 340-residue chain is Protein B17 (340 aa).

It belongs to the orthopoxvirus B17 protein family.

This is Protein B17 from Vaccinia virus (strain Western Reserve) (VACV).